We begin with the raw amino-acid sequence, 803 residues long: Sensor histidine kinase CheAY (803 aa).

Residue H47 is modified to Phosphohistidine. 2 disordered regions span residues 134–185 and 209–255; these read LESA…DEPD and EADK…ENKA. 3 stretches are compositionally biased toward basic and acidic residues: residues 136 to 166, 209 to 226, and 233 to 254; these read SAKERTTEAPQKENKEETKEEAKEENKENKA, EADKERRAQKKQEAKPKQ, and ETPKAPKTETKAKAKADTEENK. The Histidine kinase domain occupies 270-517; that stretch reads RLDHLMNLIG…TQKLKIPLTL (248 aa). H273 is modified (phosphohistidine; by autocatalysis). Residues 519 to 653 enclose the CheW-like domain; sequence IIQALLVGVQ…VGAMMDMAKS (135 aa). Positions 678–796 constitute a Response regulatory domain; sequence IVLAIDDSST…YLTTVVKRSI (119 aa). Position 729 is a 4-aspartylphosphate (D729).

Post-translationally, autophosphorylated.

The catalysed reaction is ATP + protein L-histidine = ADP + protein N-phospho-L-histidine.. Its function is as follows. Member of the two-component regulatory system CheAY/CheY that regulates chemotaxis and colonization of the gastric mucosa. Functions as a sensor protein kinase which is autophosphorylated at a histidine residue and transfers its phosphate group to the conserved aspartic acid residue in the regulatory domain of CheY. In turn, phosphorylated CheY (CheY-P) interacts with the flagellar motor protein FliM to cause clockwise flagellar rotation and bacterial reversals, as opposed to straight swimming when CheY is not phosphorylated. This chain is Sensor histidine kinase CheAY (cheAY), found in Helicobacter pylori (strain ATCC 700392 / 26695) (Campylobacter pylori).